A 452-amino-acid chain; its full sequence is Phosphoglucosamine mutase (452 aa).

S104 functions as the Phosphoserine intermediate in the catalytic mechanism. The Mg(2+) site is built by S104, D246, D248, and D250. S104 is subject to Phosphoserine.

Belongs to the phosphohexose mutase family. It depends on Mg(2+) as a cofactor. Activated by phosphorylation.

It carries out the reaction alpha-D-glucosamine 1-phosphate = D-glucosamine 6-phosphate. In terms of biological role, catalyzes the conversion of glucosamine-6-phosphate to glucosamine-1-phosphate. This is Phosphoglucosamine mutase from Streptomyces avermitilis (strain ATCC 31267 / DSM 46492 / JCM 5070 / NBRC 14893 / NCIMB 12804 / NRRL 8165 / MA-4680).